The primary structure comprises 88 residues: Large ribosomal subunit protein bL27 (88 aa).

The disordered stretch occupies residues 1–21 (MAHKKGVGSSRNGRDSQPKML).

It belongs to the bacterial ribosomal protein bL27 family.

This is Large ribosomal subunit protein bL27 from Pelotomaculum thermopropionicum (strain DSM 13744 / JCM 10971 / SI).